Consider the following 348-residue polypeptide: Phosphate acyltransferase (348 aa).

It belongs to the PlsX family. Homodimer. Probably interacts with PlsY.

The protein resides in the cytoplasm. It carries out the reaction a fatty acyl-[ACP] + phosphate = an acyl phosphate + holo-[ACP]. It participates in lipid metabolism; phospholipid metabolism. Catalyzes the reversible formation of acyl-phosphate (acyl-PO(4)) from acyl-[acyl-carrier-protein] (acyl-ACP). This enzyme utilizes acyl-ACP as fatty acyl donor, but not acyl-CoA. The sequence is that of Phosphate acyltransferase from Rhizobium rhizogenes (strain K84 / ATCC BAA-868) (Agrobacterium radiobacter).